The primary structure comprises 140 residues: Large ribosomal subunit protein bL17 (140 aa).

Belongs to the bacterial ribosomal protein bL17 family. Part of the 50S ribosomal subunit. Contacts protein L32.

This is Large ribosomal subunit protein bL17 from Hyphomonas neptunium (strain ATCC 15444).